Reading from the N-terminus, the 186-residue chain is Der GTPase-activating protein YihI (186 aa).

The tract at residues 1–65 (MARTKKTRRI…AGSRHSAVDT (65 aa)) is disordered. Basic and acidic residues-rich tracts occupy residues 9-25 (RITD…RPEN) and 34-45 (TRYELDAKSREE).

This sequence belongs to the YihI family. Interacts with Der.

In terms of biological role, a GTPase-activating protein (GAP) that modifies Der/EngA GTPase function. May play a role in ribosome biogenesis. The sequence is that of Der GTPase-activating protein YihI from Histophilus somni (strain 129Pt) (Haemophilus somnus).